Here is a 139-residue protein sequence, read N- to C-terminus: Small ribosomal subunit protein bS16 (139 aa).

Residues 84–139 (KGEPAPAPLLQPAEKAARPSFEAIGGEDEGKGEAITQKKKADKKDEAAAESSASEA) are disordered.

Belongs to the bacterial ribosomal protein bS16 family.

The protein is Small ribosomal subunit protein bS16 of Streptomyces coelicolor (strain ATCC BAA-471 / A3(2) / M145).